The following is a 242-amino-acid chain: Prosalusin (242 aa).

The signal sequence occupies residues 1 to 26; sequence MAAATRGCRPWGSLLGLLGLVSAAAA. A propeptide spanning residues 27–189 is cleaved from the precursor; sequence AWDLASLRCT…SSWVVYGTNY (163 aa). Position 93–100 (93–100) interacts with ATP; it reads GWTGTGKS. N149 carries an N-linked (GlcNAc...) asparagine glycan. The disordered stretch occupies residues 210–242; sequence PPRRSGALPPAPAAPRPALRAQRAGPAGPGAKG. Residues 225 to 235 show a composition bias toward low complexity; it reads RPALRAQRAGP. K241 carries the lysine amide modification.

The protein belongs to the ClpA/ClpB family. Torsin subfamily. In terms of processing, amidation of salusin-alpha(29-Gly) by peptidylglycine alpha-amidating monooxygenase, PAM, converts Lys-241-Gly-242 to Lys-241-NH2 and gives raise to salusin-alpha. Isoform 4 is ubiquitously expressed, with high level in vascular endothelial cells and vascular smooth muscle cells.

The protein resides in the secreted. In terms of biological role, salusins -alpha and -beta may be endocrine and/or paracrine factors able to increase intracellular calcium concentrations and induce cell mitogenesis. Salusins may also be potent hypotensive peptides. The polypeptide is Prosalusin (TOR2A) (Homo sapiens (Human)).